Reading from the N-terminus, the 791-residue chain is Linear element protein rec10 (791 aa).

Disordered regions lie at residues 462–523 (NSVP…AKSN) and 644–672 (LLDG…TLIS). The Nuclear localization signal signature appears at 485 to 492 (QRRKDGKF). Residues 493-503 (AKSTKRKKQKS) are compositionally biased toward basic residues. A compositionally biased stretch (polar residues) spans 644–657 (LLDGTCSSPPNNEC).

Component of linear elements (LinEs), which are similar to synaptonemal complexes, at least composed of rec27, rec25, rec10 and mug20. Interacts with rec25; the interaction is direct. Interacts with hop1 (via N-terminus); the interaction is direct. Interacts with rec15 (via C-terminus); the interaction is direct.

The protein localises to the nucleus. It localises to the chromosome. Functionally, organizes linear element components on chromosomes and is thus required for meiotic DNA recombination. The chain is Linear element protein rec10 from Schizosaccharomyces pombe (strain 972 / ATCC 24843) (Fission yeast).